A 464-amino-acid polypeptide reads, in one-letter code: Arginine biosynthesis bifunctional protein ArgJ, chloroplastic (464 aa).

Substrate is bound by residues Thr208, Lys234, Thr245, Glu332, Asn459, and Thr464. Catalysis depends on Thr245, which acts as the Nucleophile.

It belongs to the ArgJ family. As to quaternary structure, heterodimer of an alpha and a beta chain.

The protein localises to the plastid. The protein resides in the chloroplast. The enzyme catalyses N(2)-acetyl-L-ornithine + L-glutamate = N-acetyl-L-glutamate + L-ornithine. It catalyses the reaction L-glutamate + acetyl-CoA = N-acetyl-L-glutamate + CoA + H(+). It participates in amino-acid biosynthesis; L-arginine biosynthesis; L-ornithine and N-acetyl-L-glutamate from L-glutamate and N(2)-acetyl-L-ornithine (cyclic): step 1/1. Its pathway is amino-acid biosynthesis; L-arginine biosynthesis; N(2)-acetyl-L-ornithine from L-glutamate: step 1/4. In terms of biological role, catalyzes two activities which are involved in the cyclic version of arginine biosynthesis: the synthesis of acetylglutamate from glutamate and acetyl-CoA, and of ornithine by transacetylation between acetylornithine and glutamate. The polypeptide is Arginine biosynthesis bifunctional protein ArgJ, chloroplastic (Zea mays (Maize)).